The sequence spans 141 residues: Large ribosomal subunit protein uL16 (141 aa).

Residues 1–21 (MLMPKRVKYRKQQRGHNRGMA) form a disordered region.

This sequence belongs to the universal ribosomal protein uL16 family. As to quaternary structure, part of the 50S ribosomal subunit.

In terms of biological role, binds 23S rRNA and is also seen to make contacts with the A and possibly P site tRNAs. The protein is Large ribosomal subunit protein uL16 of Roseiflexus castenholzii (strain DSM 13941 / HLO8).